We begin with the raw amino-acid sequence, 279 residues long: Pantothenate synthetase (279 aa).

31 to 38 (MGNLHGGH) contributes to the ATP binding site. H38 serves as the catalytic Proton donor. Residue Q62 participates in (R)-pantoate binding. Q62 serves as a coordination point for beta-alanine. 150 to 153 (GRKD) provides a ligand contact to ATP. Residue Q156 coordinates (R)-pantoate. ATP-binding positions include V179 and 187 to 190 (KSSR).

This sequence belongs to the pantothenate synthetase family. As to quaternary structure, homodimer.

The protein localises to the cytoplasm. The enzyme catalyses (R)-pantoate + beta-alanine + ATP = (R)-pantothenate + AMP + diphosphate + H(+). It functions in the pathway cofactor biosynthesis; (R)-pantothenate biosynthesis; (R)-pantothenate from (R)-pantoate and beta-alanine: step 1/1. In terms of biological role, catalyzes the condensation of pantoate with beta-alanine in an ATP-dependent reaction via a pantoyl-adenylate intermediate. The polypeptide is Pantothenate synthetase (Stenotrophomonas maltophilia (strain K279a)).